A 100-amino-acid chain; its full sequence is Large ribosomal subunit protein uL23 (100 aa).

Belongs to the universal ribosomal protein uL23 family. Part of the 50S ribosomal subunit. Contacts protein L29, and trigger factor when it is bound to the ribosome.

Its function is as follows. One of the early assembly proteins it binds 23S rRNA. One of the proteins that surrounds the polypeptide exit tunnel on the outside of the ribosome. Forms the main docking site for trigger factor binding to the ribosome. This is Large ribosomal subunit protein uL23 from Corynebacterium aurimucosum (strain ATCC 700975 / DSM 44827 / CIP 107346 / CN-1) (Corynebacterium nigricans).